The following is a 211-amino-acid chain: Guanylate kinase (211 aa).

One can recognise a Guanylate kinase-like domain in the interval 5-185; it reads GLLLILSSPS…AEEQLKMILS (181 aa). 12–19 contributes to the ATP binding site; sequence SPSGAGKS.

Belongs to the guanylate kinase family.

It localises to the cytoplasm. It carries out the reaction GMP + ATP = GDP + ADP. Functionally, essential for recycling GMP and indirectly, cGMP. The chain is Guanylate kinase from Cereibacter sphaeroides (strain ATCC 17023 / DSM 158 / JCM 6121 / CCUG 31486 / LMG 2827 / NBRC 12203 / NCIMB 8253 / ATH 2.4.1.) (Rhodobacter sphaeroides).